The sequence spans 208 residues: ATP-dependent Clp protease proteolytic subunit 1 (208 aa).

Ser108 serves as the catalytic Nucleophile. His133 is an active-site residue.

It belongs to the peptidase S14 family. In terms of assembly, fourteen ClpP subunits assemble into 2 heptameric rings which stack back to back to give a disk-like structure with a central cavity, resembling the structure of eukaryotic proteasomes.

The protein resides in the cytoplasm. It carries out the reaction Hydrolysis of proteins to small peptides in the presence of ATP and magnesium. alpha-casein is the usual test substrate. In the absence of ATP, only oligopeptides shorter than five residues are hydrolyzed (such as succinyl-Leu-Tyr-|-NHMec, and Leu-Tyr-Leu-|-Tyr-Trp, in which cleavage of the -Tyr-|-Leu- and -Tyr-|-Trp bonds also occurs).. Cleaves peptides in various proteins in a process that requires ATP hydrolysis. Has a chymotrypsin-like activity. Plays a major role in the degradation of misfolded proteins. This Corynebacterium glutamicum (strain ATCC 13032 / DSM 20300 / JCM 1318 / BCRC 11384 / CCUG 27702 / LMG 3730 / NBRC 12168 / NCIMB 10025 / NRRL B-2784 / 534) protein is ATP-dependent Clp protease proteolytic subunit 1.